A 234-amino-acid polypeptide reads, in one-letter code: Sugar fermentation stimulation protein homolog (234 aa).

It belongs to the SfsA family.

The protein is Sugar fermentation stimulation protein homolog of Bartonella quintana (strain Toulouse) (Rochalimaea quintana).